Here is a 216-residue protein sequence, read N- to C-terminus: Early E3 25 kDa glycoprotein (216 aa).

7 N-linked (GlcNAc...) asparagine; by host glycosylation sites follow: Asn25, Asn82, Asn97, Asn109, Asn142, Asn147, and Asn160.

This Canis lupus familiaris (Dog) protein is Early E3 25 kDa glycoprotein.